The chain runs to 123 residues: Phospholipase A2 (123 aa).

7 disulfides stabilise this stretch: C11–C77, C27–C123, C29–C45, C44–C105, C51–C98, C61–C91, and C84–C96. Ca(2+) is bound by residues Y28, G30, and G32. H48 is an active-site residue. D49 provides a ligand contact to Ca(2+). The active site involves D99.

Belongs to the phospholipase A2 family. As to quaternary structure, monomer or homodimer. Ca(2+) serves as cofactor. Activated by trypsin cleavage in the duodenum. Can also be activated by thrombin or autocatalytically.

The protein localises to the secreted. The enzyme catalyses a 1,2-diacyl-sn-glycero-3-phosphocholine + H2O = a 1-acyl-sn-glycero-3-phosphocholine + a fatty acid + H(+). It catalyses the reaction 1,2-ditetradecanoyl-sn-glycero-3-phosphocholine + H2O = 1-tetradecanoyl-sn-glycero-3-phosphocholine + tetradecanoate + H(+). The catalysed reaction is 1,2-dihexadecanoyl-sn-glycero-3-phosphocholine + H2O = 1-hexadecanoyl-sn-glycero-3-phosphocholine + hexadecanoate + H(+). It carries out the reaction 1-hexadecanoyl-2-(9Z-octadecenoyl)-sn-glycero-3-phosphocholine + H2O = 1-hexadecanoyl-sn-glycero-3-phosphocholine + (9Z)-octadecenoate + H(+). The enzyme catalyses 1-hexadecanoyl-2-(5Z,8Z,11Z,14Z-eicosatetraenoyl)-sn-glycero-3-phosphocholine + H2O = 1-hexadecanoyl-sn-glycero-3-phosphocholine + (5Z,8Z,11Z,14Z)-eicosatetraenoate + H(+). It catalyses the reaction 1-hexadecanoyl-2-(9Z-octadecenoyl)-sn-glycero-3-phospho-(1'-sn-glycerol) + H2O = 1-hexadecanoyl-sn-glycero-3-phospho-(1'-sn-glycerol) + (9Z)-octadecenoate + H(+). The catalysed reaction is N-hexadecanoyl-1,2-di-(9Z-octadecenoyl)-sn-glycero-3-phosphoethanolamine + H2O = N-hexadecanoyl-1-(9Z-octadecenoyl)-sn-glycero-3-phosphoethanolamine + (9Z)-octadecenoate + H(+). It carries out the reaction 1-hexadecanoyl-2-(9Z,12Z-octadecadienoyl)-sn-glycero-3-phosphoethanolamine + H2O = 1-hexadecanoyl-sn-glycero-3-phosphoethanolamine + (9Z,12Z)-octadecadienoate + H(+). The enzyme catalyses N,1-dihexadecanoyl-2-(9Z,12Z-octadecadienoyl)-sn-glycero-3-phosphoethanolamine + H2O = N,1-dihexadecanoyl-sn-glycero-3-phosphoethanolamine + (9Z,12Z)-octadecadienoate + H(+). Its function is as follows. Secretory calcium-dependent phospholipase A2 that primarily targets dietary phospholipids in the intestinal tract. Hydrolyzes the ester bond of the fatty acyl group attached at sn-2 position of phospholipids (phospholipase A2 activity) with preference for phosphatidylethanolamines and phosphatidylglycerols over phosphatidylcholines. May play a role in the biosynthesis of N-acyl ethanolamines that regulate energy metabolism and inflammation in the intestinal tract. Hydrolyzes N-acyl phosphatidylethanolamines to N-acyl lysophosphatidylethanolamines, which are further cleaved by a lysophospholipase D to release N-acyl ethanolamines. May act in an autocrine and paracrine manner. Has anti-helminth activity in a process regulated by gut microbiota. Upon helminth infection of intestinal epithelia, directly affects phosphatidylethanolamine contents in the membrane of helminth larvae, likely controlling an array of phospholipid-mediated cellular processes such as membrane fusion and cell division while providing for better immune recognition, ultimately reducing larvae integrity and infectivity. This chain is Phospholipase A2 (PLA2G1B), found in Ovis aries (Sheep).